The following is a 476-amino-acid chain: Doublesex and mab-3 related transcription factor 3 (476 aa).

The DM DNA-binding region spans 29–76 (CARCRNHGVLSWLKGHKRYCRFKDCTCEKCILIIERQRVMAAQVALRR). Disordered stretches follow at residues 89–130 (DSLR…RPAT) and 147–195 (GTLP…SKNC). Low complexity predominate over residues 102–121 (DAAATAATASQSSPASQASQ). Basic and acidic residues predominate over residues 176 to 185 (FSDKDTDQRS). Residues 255-290 (RPPLEVLKKIFPNQKPTVLELILKGCGGDLVSAVEV) enclose the DMA domain. Over residues 418–432 (NSTSVFRSSPVLSSR) the composition is skewed to polar residues. Positions 418–476 (NSTSVFRSSPVLSSRTTEDPRISIPDDGCPIVAKQSIYTEDDYDERSDSSDSRILNTSS) are disordered.

Belongs to the DMRT family.

The protein resides in the nucleus. In terms of biological role, probable transcription factor that plays a role in configuring the spinal circuits controlling stride in vertebrates. Involved in neuronal specification within a specific subdivision of spinal cord neurons and in the development of a coordinated locomotor network controlling limb movements. May regulate transcription during sexual development. This is Doublesex and mab-3 related transcription factor 3 (Dmrt3) from Rattus norvegicus (Rat).